A 477-amino-acid polypeptide reads, in one-letter code: Delayed-rectifier potassium channel regulatory subunit KCNS2 (477 aa).

The Cytoplasmic segment spans residues 1–184 (MTRQSLWDLS…LALDNPGYSV (184 aa)). The helical transmembrane segment at 185 to 206 (LSRVFSVLSILVVLGSIITMCL) threads the bilayer. Residues 207–225 (NSLPDFQIPDSQGNPGEDP) lie on the Extracellular side of the membrane. A helical transmembrane segment spans residues 226–248 (RFEIVEHFGIAWFTFELVARFAV). The Cytoplasmic segment spans residues 249 to 259 (APDFLKFFKNA). The helical transmembrane segment at 260–280 (LNLIDLMSIVPFYITLVVNLV) threads the bilayer. The Extracellular segment spans residues 281–290 (VESSPTLANL). Residues 291–311 (GRVAQVLRLMRIFRILKLARH) form a helical; Voltage-sensor membrane-spanning segment. Over 312 to 326 (STGLRSLGATLKYSY) the chain is Cytoplasmic. Residues 327 to 348 (KEVGLLLLYLSVGISIFSVVAY) form a helical membrane-spanning segment. Residues 349 to 361 (TIEKEENEGLATI) lie on the Extracellular side of the membrane. Residues 362–373 (PACWWWATVSMT) constitute an intramembrane region (helical). The Selectivity filter signature appears at 374–379 (TVGYGD). An intramembrane segment occupies 374-381 (TVGYGDVV). At 382–388 (PGTTAGK) the chain is on the extracellular side. A helical membrane pass occupies residues 389–417 (LTASACILAGILVVVLPITLIFNKFSHFY). Residues 418–477 (RRQKQLESAMRSCDFGDGMKEVPSVNLRDYYAHKVKSLMASLTNMSRSSPSELSLDDSLH) lie on the Cytoplasmic side of the membrane.

It belongs to the potassium channel family. S (TC 1.A.1.2) subfamily. Kv9.2/KCNS2 sub-subfamily. Heterotetramer with KCNB1 and KCNB2. Does not form homomultimers. In terms of tissue distribution, detected in brain, lung and in pulmonary arteries.

The protein resides in the cell membrane. Its function is as follows. Potassium channel regulatory subunit that modulate the delayed rectifier voltage-gated potassium channel activity of KCNB1 and KCNB2 by altering their kinetics, expression levels, and shifting the half-inactivation potential to more polarized values. While it does not form functional channels on its own, it can form functional heterotetrameric channels with KCNB1 and KCNB2. Each regulatory subunit has unique regulatory properties that can lead to extensive inhibition, significant changes in kinetics, and/or substantial shifts in the voltage dependencies of the inactivation process. The chain is Delayed-rectifier potassium channel regulatory subunit KCNS2 from Rattus norvegicus (Rat).